Consider the following 192-residue polypeptide: Imidazoleglycerol-phosphate dehydratase (192 aa).

The protein belongs to the imidazoleglycerol-phosphate dehydratase family.

The protein resides in the cytoplasm. The catalysed reaction is D-erythro-1-(imidazol-4-yl)glycerol 3-phosphate = 3-(imidazol-4-yl)-2-oxopropyl phosphate + H2O. The protein operates within amino-acid biosynthesis; L-histidine biosynthesis; L-histidine from 5-phospho-alpha-D-ribose 1-diphosphate: step 6/9. The chain is Imidazoleglycerol-phosphate dehydratase from Staphylococcus aureus (strain bovine RF122 / ET3-1).